The primary structure comprises 122 residues: Large ribosomal subunit protein uL14 (122 aa).

It belongs to the universal ribosomal protein uL14 family. As to quaternary structure, part of the 50S ribosomal subunit. Forms a cluster with proteins L3 and L19. In the 70S ribosome, L14 and L19 interact and together make contacts with the 16S rRNA in bridges B5 and B8.

Binds to 23S rRNA. Forms part of two intersubunit bridges in the 70S ribosome. The protein is Large ribosomal subunit protein uL14 of Shouchella clausii (strain KSM-K16) (Alkalihalobacillus clausii).